A 265-amino-acid polypeptide reads, in one-letter code: Type-1Ba cytolytic delta-endotoxin (265 aa).

Belongs to the cyt1/cyt2 endotoxin family. Active after proteolytic processing.

Its function is as follows. Kills the larvae of dipteran insects by making pores in the epithelial cell membrane of the insect midgut. This is Type-1Ba cytolytic delta-endotoxin (cyt1Ba1) from Bacillus thuringiensis subsp. neoleoensis.